The sequence spans 204 residues: uncharacterized protein (204 aa).

A helical membrane pass occupies residues 63-83 (SLLLSMVASVTAAGGNAAIVG).

Its subcellular location is the membrane. This is an uncharacterized protein from Mycobacterium tuberculosis (strain ATCC 25618 / H37Rv).